A 187-amino-acid chain; its full sequence is V-type ATP synthase subunit E (187 aa).

The protein belongs to the V-ATPase E subunit family.

Functionally, produces ATP from ADP in the presence of a proton gradient across the membrane. This is V-type ATP synthase subunit E from Geotalea uraniireducens (strain Rf4) (Geobacter uraniireducens).